Consider the following 195-residue polypeptide: tRNA (pseudouridine(54)-N(1))-methyltransferase (195 aa).

An S-adenosyl-L-methionine-binding site is contributed by L129.

It belongs to the methyltransferase superfamily. TrmY family. As to quaternary structure, homodimer.

It localises to the cytoplasm. The catalysed reaction is pseudouridine(54) in tRNA + S-adenosyl-L-methionine = N(1)-methylpseudouridine(54) in tRNA + S-adenosyl-L-homocysteine + H(+). Functionally, specifically catalyzes the N1-methylation of pseudouridine at position 54 (Psi54) in tRNAs. This chain is tRNA (pseudouridine(54)-N(1))-methyltransferase, found in Methanocorpusculum labreanum (strain ATCC 43576 / DSM 4855 / Z).